The primary structure comprises 433 residues: GTPase Obg (433 aa).

An Obg domain is found at 4–162 (EDFVDRVTIF…RWLELELKLL (159 aa)). Residues 163–334 (ADAGLIGFPN…LKQKIFEIVG (172 aa)) form the OBG-type G domain. GTP contacts are provided by residues 169–176 (GFPNVGKS), 194–198 (FTTLV), 216–219 (DIPG), 286–289 (NKID), and 315–317 (SAL). Positions 176 and 196 each coordinate Mg(2+). In terms of domain architecture, OCT spans 356–433 (TKIEERFDFE…IGQYSFEYKE (78 aa)).

This sequence belongs to the TRAFAC class OBG-HflX-like GTPase superfamily. OBG GTPase family. As to quaternary structure, monomer. The cofactor is Mg(2+).

It localises to the cytoplasm. Functionally, an essential GTPase which binds GTP, GDP and possibly (p)ppGpp with moderate affinity, with high nucleotide exchange rates and a fairly low GTP hydrolysis rate. Plays a role in control of the cell cycle, stress response, ribosome biogenesis and in those bacteria that undergo differentiation, in morphogenesis control. The protein is GTPase Obg of Pseudothermotoga lettingae (strain ATCC BAA-301 / DSM 14385 / NBRC 107922 / TMO) (Thermotoga lettingae).